We begin with the raw amino-acid sequence, 100 residues long: Small ribosomal subunit protein uS14c (100 aa).

This sequence belongs to the universal ribosomal protein uS14 family. As to quaternary structure, part of the 30S ribosomal subunit.

It localises to the plastid. It is found in the chloroplast. Binds 16S rRNA, required for the assembly of 30S particles. The polypeptide is Small ribosomal subunit protein uS14c (Gracilaria tenuistipitata var. liui (Red alga)).